A 95-amino-acid chain; its full sequence is Large ribosomal subunit protein bL25 (95 aa).

The protein belongs to the bacterial ribosomal protein bL25 family. In terms of assembly, part of the 50S ribosomal subunit; part of the 5S rRNA/L5/L18/L25 subcomplex. Contacts the 5S rRNA. Binds to the 5S rRNA independently of L5 and L18.

Its function is as follows. This is one of the proteins that binds to the 5S RNA in the ribosome where it forms part of the central protuberance. In Actinobacillus succinogenes (strain ATCC 55618 / DSM 22257 / CCUG 43843 / 130Z), this protein is Large ribosomal subunit protein bL25.